A 308-amino-acid polypeptide reads, in one-letter code: Ribonuclease Z (308 aa).

7 residues coordinate Zn(2+): histidine 61, histidine 63, aspartate 65, histidine 66, histidine 142, aspartate 211, and histidine 270. Aspartate 65 functions as the Proton acceptor in the catalytic mechanism.

Belongs to the RNase Z family. Homodimer. It depends on Zn(2+) as a cofactor.

The enzyme catalyses Endonucleolytic cleavage of RNA, removing extra 3' nucleotides from tRNA precursor, generating 3' termini of tRNAs. A 3'-hydroxy group is left at the tRNA terminus and a 5'-phosphoryl group is left at the trailer molecule.. Zinc phosphodiesterase, which displays some tRNA 3'-processing endonuclease activity. Probably involved in tRNA maturation, by removing a 3'-trailer from precursor tRNA. The polypeptide is Ribonuclease Z (Clostridium beijerinckii (strain ATCC 51743 / NCIMB 8052) (Clostridium acetobutylicum)).